The chain runs to 201 residues: UPF0376 protein F10G2.1 (201 aa).

Residues 1–3 (MKH) lie on the Cytoplasmic side of the membrane. A helical; Signal-anchor for type II membrane protein transmembrane segment spans residues 4–24 (FLLLAIIGILFLGSTYGASVA). Over 25–201 (TEKLKASNCT…LLECDFRNIQ (177 aa)) the chain is Extracellular. N-linked (GlcNAc...) asparagine glycosylation is found at Asn32 and Asn124.

The protein belongs to the UPF0376 family.

Its subcellular location is the membrane. This chain is UPF0376 protein F10G2.1, found in Caenorhabditis elegans.